The primary structure comprises 915 residues: Kinesin-like protein KIN-10A (915 aa).

Residues 1–16 (MAPPTPSPRPGPPPTP) are compositionally biased toward pro residues. Disordered regions lie at residues 1–28 (MAPPTPSPRPGPPPTPQAAMTTPLKTPA) and 34–53 (HFPAMTPRNGGGGGAAAGGT). Positions 56–391 (PVEVIGRIRN…LEYGAKAKCI (336 aa)) constitute a Kinesin motor domain. 137 to 144 (GPTGSGKS) contributes to the ATP binding site. Residues 426 to 517 (NLQKENKLRE…QRLKEVEREK (92 aa)) adopt a coiled-coil conformation. Positions 676-718 (PAKKAFGDENNEPAKQTFGDENKQQPAKRVFGDENKDPSAWGA) are disordered.

The protein belongs to the TRAFAC class myosin-kinesin ATPase superfamily. Kinesin family. KIN-10 subfamily.

The polypeptide is Kinesin-like protein KIN-10A (Oryza sativa subsp. japonica (Rice)).